We begin with the raw amino-acid sequence, 156 residues long: Transcription elongation factor GreA (156 aa).

Residues 1–32 (MKKVRLTREGYEKLKKELEDLKRKFMYEISER) adopt a coiled-coil conformation.

It belongs to the GreA/GreB family.

Its function is as follows. Necessary for efficient RNA polymerase transcription elongation past template-encoded arresting sites. The arresting sites in DNA have the property of trapping a certain fraction of elongating RNA polymerases that pass through, resulting in locked ternary complexes. Cleavage of the nascent transcript by cleavage factors such as GreA or GreB allows the resumption of elongation from the new 3'terminus. GreA releases sequences of 2 to 3 nucleotides. This chain is Transcription elongation factor GreA, found in Thermotoga sp. (strain RQ2).